A 288-amino-acid polypeptide reads, in one-letter code: Mortality factor 4-like protein 2 (288 aa).

The segment covering 1-15 has biased composition (polar residues); sequence MSSRKQASQTRGQQS. The segment at 1-115 is disordered; the sequence is MSSRKQASQT…DPTVESEEAF (115 aa). Phosphoserine is present on S71. The region spanning 117–288 is the MRG domain; sequence SRMEVKVKIP…ASADYHRKAL (172 aa).

As to quaternary structure, component of the NuA4 histone acetyltransferase complex which contains the catalytic subunit KAT5/TIP60 and the subunits EP400, TRRAP/PAF400, BRD8/SMAP, EPC1, DMAP1/DNMAP1, RUVBL1/TIP49, RUVBL2, ING3, actin, ACTL6A/BAF53A, MORF4L1/MRG15, MORF4L2/MRGX, MRGBP, YEATS4/GAS41 and VPS72/YL1. The NuA4 complex interacts with MYC and the adenovirus E1A protein. MORF4L1 may also participate in the formation of NuA4 related complexes which lack the KAT5/TIP60 catalytic subunit, but which include the SWI/SNF related protein SRCAP. Component of the MSIN3A histone deacetylase complex, which includes SIN3A, HDAC2, ARID4B, MORF4L1, RBBP4/RbAp48, and RBBP7/RbAp46. Interacts with MRFAP1 and RB1. May also interact with one or more as yet undefined members of the TLE (transducin-like enhancer of split) family of transcriptional repressors.

Its subcellular location is the nucleus. Component of the NuA4 histone acetyltransferase complex which is involved in transcriptional activation of select genes principally by acetylation of nucleosomal histone H4 and H2A. This modification may both alter nucleosome - DNA interactions and promote interaction of the modified histones with other proteins which positively regulate transcription. This complex may be required for the activation of transcriptional programs associated with oncogene and proto-oncogene mediated growth induction, tumor suppressor mediated growth arrest and replicative senescence, apoptosis, and DNA repair. The NuA4 complex ATPase and helicase activities seem to be, at least in part, contributed by the association of RUVBL1 and RUVBL2 with EP400. NuA4 may also play a direct role in DNA repair when directly recruited to sites of DNA damage. Also a component of the MSIN3A complex which acts to repress transcription by deacetylation of nucleosomal histones. This chain is Mortality factor 4-like protein 2 (Morf4l2), found in Mus musculus (Mouse).